The following is a 283-amino-acid chain: Thymidylate synthase (283 aa).

DUMP is bound at residue arginine 22. The active-site Nucleophile is the cysteine 160. DUMP-binding positions include 180 to 183 (RSCD), asparagine 191, and 221 to 223 (HIY). Aspartate 183 is a binding site for (6R)-5,10-methylene-5,6,7,8-tetrahydrofolate. Residue serine 282 coordinates (6R)-5,10-methylene-5,6,7,8-tetrahydrofolate.

Belongs to the thymidylate synthase family. Bacterial-type ThyA subfamily. As to quaternary structure, homodimer.

The protein localises to the cytoplasm. The catalysed reaction is dUMP + (6R)-5,10-methylene-5,6,7,8-tetrahydrofolate = 7,8-dihydrofolate + dTMP. Its pathway is pyrimidine metabolism; dTTP biosynthesis. Functionally, catalyzes the reductive methylation of 2'-deoxyuridine-5'-monophosphate (dUMP) to 2'-deoxythymidine-5'-monophosphate (dTMP) while utilizing 5,10-methylenetetrahydrofolate (mTHF) as the methyl donor and reductant in the reaction, yielding dihydrofolate (DHF) as a by-product. This enzymatic reaction provides an intracellular de novo source of dTMP, an essential precursor for DNA biosynthesis. This is Thymidylate synthase from Histophilus somni (strain 129Pt) (Haemophilus somnus).